A 57-amino-acid chain; its full sequence is MVIPIRPLSPSLRKRTSGRFRQWSSRVTSGMVCLVRYSALCSLNTMQQLWKRFVLVV.

In Escherichia coli (Bacteriophage T3), this protein is Gene 19.3 protein (19.3).